Reading from the N-terminus, the 197-residue chain is Rac-like GTP-binding protein RAC1 (197 aa).

Residue 13–20 (GDGAVGKT) coordinates GTP. The Effector region signature appears at 35 to 43 (YVPTVFDNF). GTP-binding positions include 60–64 (DTAGQ) and 118–121 (TKLD). At Cys194 the chain carries Cysteine methyl ester. A lipid anchor (S-geranylgeranyl cysteine) is attached at Cys194. The propeptide at 195–197 (SIL) is removed in mature form.

The protein belongs to the small GTPase superfamily. Rho family.

It localises to the cytoplasm. Its subcellular location is the membrane. In terms of biological role, inactive GDP-bound Rho GTPases reside in the cytosol, are found in a complex with Rho GDP-dissociation inhibitors (Rho GDIs), and are released from the GDI protein in order to translocate to membranes upon activation. The sequence is that of Rac-like GTP-binding protein RAC1 (RAC1) from Lotus japonicus (Lotus corniculatus var. japonicus).